We begin with the raw amino-acid sequence, 778 residues long: Subtilisin-like protease SBT5.4 (778 aa).

Positions 1–35 (MSMTRRYSSTQYSNKMSLQSLSSLLLLVTLFFSPA) are cleaved as a signal peptide. The Inhibitor I9 domain maps to 41-126 (SYIVYLGSHA…VFPNKGRKLH (86 aa)). The 505-residue stretch at 130–634 (SWNFMLLAKN…SGHVQPNKAA (505 aa)) folds into the Peptidase S8 domain. Asp-163 functions as the Charge relay system in the catalytic mechanism. Asn-218 carries an N-linked (GlcNAc...) asparagine glycan. His-230 functions as the Charge relay system in the catalytic mechanism. Asn-253 and Asn-404 each carry an N-linked (GlcNAc...) asparagine glycan. Residues 401–486 (ANGNVTDALL…KDGETLFSYL (86 aa)) form the PA domain. Ser-567 acts as the Charge relay system in catalysis. N-linked (GlcNAc...) asparagine glycans are attached at residues Asn-657, Asn-690, and Asn-732.

It belongs to the peptidase S8 family. As to expression, expressed in the vasculature of roots and leaves, stomata, sepals, stigma, anthers and siliques.

Its subcellular location is the endoplasmic reticulum. The protein localises to the cell membrane. In terms of biological role, serine protease. Has a substrate preference for the hydrophobic residues Phe and Ala and the basic residue Asp in the P1 position, and for Asp, Leu or Ala in the P1' position. Interferes with CLAVATA 3 (CLV3) signaling, but does not cleave CLV3. This Arabidopsis thaliana (Mouse-ear cress) protein is Subtilisin-like protease SBT5.4.